We begin with the raw amino-acid sequence, 446 residues long: Probable glycine dehydrogenase (decarboxylating) subunit 1 (446 aa).

Belongs to the GcvP family. N-terminal subunit subfamily. In terms of assembly, the glycine cleavage system is composed of four proteins: P, T, L and H. In this organism, the P 'protein' is a heterodimer of two subunits.

It catalyses the reaction N(6)-[(R)-lipoyl]-L-lysyl-[glycine-cleavage complex H protein] + glycine + H(+) = N(6)-[(R)-S(8)-aminomethyldihydrolipoyl]-L-lysyl-[glycine-cleavage complex H protein] + CO2. In terms of biological role, the glycine cleavage system catalyzes the degradation of glycine. The P protein binds the alpha-amino group of glycine through its pyridoxal phosphate cofactor; CO(2) is released and the remaining methylamine moiety is then transferred to the lipoamide cofactor of the H protein. The sequence is that of Probable glycine dehydrogenase (decarboxylating) subunit 1 from Thermococcus onnurineus (strain NA1).